Here is a 309-residue protein sequence, read N- to C-terminus: Dicarboxylate carrier UCP2 (309 aa).

The Mitochondrial intermembrane portion of the chain corresponds to 1 to 16; that stretch reads MVGFKATDVPPTATVK. Solcar repeat units follow at residues 11 to 106, 114 to 203, and 212 to 297; these read PTAT…VKQF, ASIG…IKDA, and DDLP…LKRA. The tract at residues 16 to 63 is important for interaction with long-chain fatty acids; that stretch reads KFLGAGTAACIADLITFPLDTAKVRLQIQGESQGPVHATASAQYRGVM. Residues 17–40 traverse the membrane as a helical segment; the sequence is FLGAGTAACIADLITFPLDTAKVR. Over 41–77 the chain is Mitochondrial matrix; the sequence is LQIQGESQGPVHATASAQYRGVMGTILTMVRTEGPRS. A helical membrane pass occupies residues 78 to 103; that stretch reads LYNGLVAGLQRQMSFASVRIGLYDSV. The Mitochondrial intermembrane segment spans residues 104-119; that stretch reads KQFYTKGSEHASIGSR. The chain crosses the membrane as a helical span at residues 120 to 145; sequence LLAGSTTGALAVAVAQPTDVVKVRFQ. Topologically, residues 146–173 are mitochondrial matrix; it reads AQARAGGGRRYQSTVNAYKTIAREEGFR. Residues 174–199 form a helical membrane-spanning segment; sequence GLWKGTSPNVARNAIVNCAELVTYDL. Residues 200–217 are Mitochondrial intermembrane-facing; sequence IKDALLKANLMTDDLPCH. The chain crosses the membrane as a helical span at residues 218–242; it reads FTSAFGAGFCTTVIASPVDVVKTRY. At 243-268 the chain is on the mitochondrial matrix side; it reads MNSALGQYSSAGHCALTMLQKEGPRA. Residues 269–294 form a helical membrane-spanning segment; sequence FYKGFMPSFLRLGSWNVVMFVTYEQL. The important for interaction with long-chain fatty acids stretch occupies residues 278 to 285; the sequence is LRLGSWNV. Over 295-309 the chain is Mitochondrial intermembrane; that stretch reads KRALMAACTSREAPF.

Belongs to the mitochondrial carrier (TC 2.A.29) family. Homotetramer. Adopts an asymmetrical dimer of dimers functional form. Interacts with MICU1 (when methylated); leading to decrease the calcium sensitivity of MICU1.

It localises to the mitochondrion inner membrane. The catalysed reaction is L-aspartate(out) + phosphate(in) + H(+)(in) = L-aspartate(in) + phosphate(out) + H(+)(out). The enzyme catalyses oxaloacetate(out) + phosphate(in) + H(+)(in) = oxaloacetate(in) + phosphate(out) + H(+)(out). It carries out the reaction (S)-malate(out) + phosphate(in) + H(+)(in) = (S)-malate(in) + phosphate(out) + H(+)(out). It catalyses the reaction malonate(out) + phosphate(in) + H(+)(in) = malonate(in) + phosphate(out) + H(+)(out). The catalysed reaction is sulfate(out) + phosphate(in) + H(+)(in) = sulfate(in) + phosphate(out) + H(+)(out). The enzyme catalyses (S)-malate(out) = (S)-malate(in). It carries out the reaction L-aspartate(out) = L-aspartate(in). It catalyses the reaction phosphate(in) = phosphate(out). The catalysed reaction is chloride(in) = chloride(out). The enzyme catalyses H(+)(in) = H(+)(out). It carries out the reaction a long-chain fatty acid(out) = a long-chain fatty acid(in). Functionally, antiporter that exports dicarboxylate intermediates of the Krebs cycle in exchange for phosphate plus a proton across the inner membrane of mitochondria, a process driven by mitochondrial motive force with an overall impact on glycolysis, glutaminolysis and glutathione-dependent redox balance. Continuous export of oxaloacetate and related four-carbon dicarboxylates from mitochondrial matrix into the cytosol negatively regulates the oxidation of acetyl-CoA substrates via the Krebs cycle lowering the ATP/ADP ratio and reactive oxygen species (ROS) production. May mediate inducible proton entry into the mitochondrial matrix affecting ATP turnover as a protection mechanism against oxidative stress. The proton currents are most likely associated with fatty acid flipping across the inner membrane of mitochondria in a metabolic process regulated by free fatty acids and purine nucleotides. Regulates the use of glucose as a source of energy. Required for glucose-induced DRP1-dependent mitochondrial fission and neuron activation in the ventromedial nucleus of the hypothalamus (VMH). This mitochondrial adaptation mechanism modulates the VMH pool of glucose-excited neurons with an impact on systemic glucose homeostasis. Regulates ROS levels and metabolic reprogramming of macrophages during the resolution phase of inflammation. Attenuates ROS production in response to IL33 to preserve the integrity of the Krebs cycle required for persistent production of itaconate and subsequent GATA3-dependent differentiation of inflammation-resolving alternatively activated macrophages. Can unidirectionally transport anions including L-malate, L-aspartate, phosphate and chloride ions. Does not mediate adaptive thermogenesis. The polypeptide is Dicarboxylate carrier UCP2 (UCP2) (Pongo abelii (Sumatran orangutan)).